The chain runs to 338 residues: MTQEREKAIELALSQIEKQFGKGAIMRLGADEALPDVAAIPTGSLSLDLALGVGGVPRGRIIEIYGPESSGKTTLALHIAAEAQKMGGIAAFVDAEHALDIGYARKLGVKTDDLLVSQPDTGEQALEIAEMLVRSGAVDVLVIDSVAALVPKAEIEGEMGDSHMGLQARLMSQALRKLTGIISKSNCCVIFINQIRMKIGVMFGNPETTTGGNALKFYASVRLDIRKIASLKQGQDVIGSRTKVKVVKNKVAPPFKEVEFDIYYGEGISREGDILDLAVEKGIVDKSGAWFSYGGDRIGQGRENSRLFLKERPELVNEIEGKVYDVAGIPRKGAKEAA.

An ATP-binding site is contributed by 66–73; that stretch reads GPESSGKT.

This sequence belongs to the RecA family.

It localises to the cytoplasm. Functionally, can catalyze the hydrolysis of ATP in the presence of single-stranded DNA, the ATP-dependent uptake of single-stranded DNA by duplex DNA, and the ATP-dependent hybridization of homologous single-stranded DNAs. It interacts with LexA causing its activation and leading to its autocatalytic cleavage. The polypeptide is Protein RecA (Geobacter sulfurreducens (strain ATCC 51573 / DSM 12127 / PCA)).